Here is a 199-residue protein sequence, read N- to C-terminus: NAD(P)H dehydrogenase (quinone) (199 aa).

Residues Val4 to Ile190 form the Flavodoxin-like domain. FMN is bound by residues Ser10–Ile15 and Thr78–Phe80. An NAD(+)-binding site is contributed by Tyr12. Position 98 (Trp98) interacts with substrate. Residues Ser113–Gly119 and His134 each bind FMN.

It belongs to the WrbA family. FMN is required as a cofactor.

It carries out the reaction a quinone + NADH + H(+) = a quinol + NAD(+). The catalysed reaction is a quinone + NADPH + H(+) = a quinol + NADP(+). The chain is NAD(P)H dehydrogenase (quinone) from Afipia carboxidovorans (strain ATCC 49405 / DSM 1227 / KCTC 32145 / OM5) (Oligotropha carboxidovorans).